Reading from the N-terminus, the 184-residue chain is uncharacterized protein (184 aa).

The N-terminal stretch at 1–23 is a signal peptide; it reads MFCLLHLCFYLANFASSIKRTHA.

The protein localises to the secreted. This is an uncharacterized protein from Homo sapiens (Human).